Consider the following 453-residue polypeptide: Bifunctional protein GlmU (453 aa).

The interval 1–226 (MKFSTVILAA…SIEVEGVNDR (226 aa)) is pyrophosphorylase. Residues 8 to 11 (LAAG), lysine 22, glutamine 73, 78 to 79 (GT), 100 to 102 (YGD), glycine 137, glutamate 151, asparagine 166, and asparagine 224 each bind UDP-N-acetyl-alpha-D-glucosamine. Position 102 (aspartate 102) interacts with Mg(2+). A Mg(2+)-binding site is contributed by asparagine 224. Positions 227–247 (IQLARLERAFQARQAKKLLEQ) are linker. The N-acetyltransferase stretch occupies residues 248–453 (GVMLRDPARF…AGWQRPAKKK (206 aa)). UDP-N-acetyl-alpha-D-glucosamine contacts are provided by arginine 330 and lysine 348. Catalysis depends on histidine 360, which acts as the Proton acceptor. 2 residues coordinate UDP-N-acetyl-alpha-D-glucosamine: tyrosine 363 and asparagine 374. Residues alanine 377, 383–384 (NY), serine 402, alanine 420, and arginine 437 each bind acetyl-CoA.

It in the N-terminal section; belongs to the N-acetylglucosamine-1-phosphate uridyltransferase family. This sequence in the C-terminal section; belongs to the transferase hexapeptide repeat family. Homotrimer. It depends on Mg(2+) as a cofactor.

Its subcellular location is the cytoplasm. It catalyses the reaction alpha-D-glucosamine 1-phosphate + acetyl-CoA = N-acetyl-alpha-D-glucosamine 1-phosphate + CoA + H(+). The catalysed reaction is N-acetyl-alpha-D-glucosamine 1-phosphate + UTP + H(+) = UDP-N-acetyl-alpha-D-glucosamine + diphosphate. It participates in nucleotide-sugar biosynthesis; UDP-N-acetyl-alpha-D-glucosamine biosynthesis; N-acetyl-alpha-D-glucosamine 1-phosphate from alpha-D-glucosamine 6-phosphate (route II): step 2/2. Its pathway is nucleotide-sugar biosynthesis; UDP-N-acetyl-alpha-D-glucosamine biosynthesis; UDP-N-acetyl-alpha-D-glucosamine from N-acetyl-alpha-D-glucosamine 1-phosphate: step 1/1. It functions in the pathway bacterial outer membrane biogenesis; LPS lipid A biosynthesis. Its function is as follows. Catalyzes the last two sequential reactions in the de novo biosynthetic pathway for UDP-N-acetylglucosamine (UDP-GlcNAc). The C-terminal domain catalyzes the transfer of acetyl group from acetyl coenzyme A to glucosamine-1-phosphate (GlcN-1-P) to produce N-acetylglucosamine-1-phosphate (GlcNAc-1-P), which is converted into UDP-GlcNAc by the transfer of uridine 5-monophosphate (from uridine 5-triphosphate), a reaction catalyzed by the N-terminal domain. This chain is Bifunctional protein GlmU, found in Vibrio cholerae serotype O1 (strain M66-2).